The following is a 1023-amino-acid chain: MWDQRLVRLALLQHLRAFYGIKVKGVRGQCDRRRHETAATEIGGKIFGVPFNALPHSAVPEYGHIPSFLVDACTSLEDHIHTEGLFRKSGSVIRLKALKNKVDHGEGCLSSAPPCDIAGLLKQFFRELPEPILPADLHEALLKAQQLGTEEKNKATLLLSCLLADHTVHVLRYFFNFLRNVSLRSSENKMDSSNLAVIFAPNLLQTSEGHEKMSSNTEKKLRLQAAVVQTLIDYASDIGRVPDFILEKIPAMLGIDGLCATPSLEGFEEGEYETPGEYKRKRRQSVGDFVSGALNKFKPNRTPSITPQEERIAQLSESPVILTPNAKRTLPVDSSHGFSSKKRKSIKHNFNFELLPSNLFNSSSTPVSVHIDTSSEGSSQSSLSPVLIGGNHLITAGVPRRSKRIAGKKVCRVESGKAGCFSPKISHKEKVRRSLRLKFNLGKNGREVNGCSGVNRYESVGWRLANQQSLKNRIESVKTGLLFSPDVDEKLPKKGSEKISKSEETLLTPERLVGTNYRMSWTGPNNSSFQEVDANEASSMVENLEVENSLEPDIMVEKSPATSCELTPSNLNNKHNSNITSSPLSGDENNMTKETLVKVQKAFSESGSNLHALMNQRQSSVTNVGKVKLTEPSYLEDSPEENLFETNDLTIVESKEKYEHHTGKGEKCFSERDFSPLQTQTFNRETTIKCYSTQMKMEHEKDIHSNMPKDYLSKQEFSSDEEIKKQQSPKDKLNNKLKENENMMEGNLPKCAAHSKDEARSSFSQQSTCVVTNLSKPRPMRIAKQQSLETCEKTVSESSQMTEHRKVSDHIQWFNKLSLNEPNRIKVKSPLKFQRTPVRQSVRRINSLLEYSRQPTGHKLASLGDTASPLVKSVSCDGALSSCIESASKDSSVSCIKSGPKEQKSMSCEESNIGAISKSSMELPSKSFLKMRKHPDSVNASLRSTTVYKQKILSDGQVKVPLDDLTNHDIVKPVVNNNMGISSGINNRVLRRPSERGRAWYKGSPKHPIGKTQLLPTSKPVDL.

One can recognise a Rho-GAP domain in the interval 49 to 239 (VPFNALPHSA…TLIDYASDIG (191 aa)). Ser-285 is subject to Phosphoserine. Thr-306 carries the phosphothreonine modification. Ser-316 and Ser-318 each carry phosphoserine. Phosphothreonine is present on Thr-323. Ser-339, Ser-340, and Ser-484 each carry phosphoserine. Thr-508 is subject to Phosphothreonine. The tract at residues 567 to 589 (TPSNLNNKHNSNITSSPLSGDEN) is disordered. Phosphoserine is present on residues Ser-582, Ser-585, Ser-638, and Ser-675. The segment at 714–734 (KQEFSSDEEIKKQQSPKDKLN) is disordered. A compositionally biased stretch (basic and acidic residues) spans 721 to 734 (EEIKKQQSPKDKLN). The residue at position 847 (Ser-847) is a Phosphoserine. Thr-866 carries the phosphothreonine modification. Phosphoserine is present on Ser-868. The disordered stretch occupies residues 999–1023 (AWYKGSPKHPIGKTQLLPTSKPVDL).

Its subcellular location is the nucleus. GTPase activator for the Rho-type GTPases by converting them to an inactive GDP-bound state. This is Rho GTPase-activating protein 11A from Homo sapiens (Human).